A 221-amino-acid chain; its full sequence is Urease accessory protein UreF (221 aa).

It belongs to the UreF family. UreD, UreF and UreG form a complex that acts as a GTP-hydrolysis-dependent molecular chaperone, activating the urease apoprotein by helping to assemble the nickel containing metallocenter of UreC. The UreE protein probably delivers the nickel.

It is found in the cytoplasm. Its function is as follows. Required for maturation of urease via the functional incorporation of the urease nickel metallocenter. This Microcystis aeruginosa (strain NIES-843 / IAM M-2473) protein is Urease accessory protein UreF.